Consider the following 431-residue polypeptide: Adenylosuccinate synthetase (431 aa).

GTP is bound by residues 12 to 18 (GDEGKGK) and 40 to 42 (GHT). Residue Asp-13 is the Proton acceptor of the active site. Positions 13 and 40 each coordinate Mg(2+). Residues 13-16 (DEGK), 38-41 (NAGH), Thr-128, Arg-142, Gln-223, Thr-238, and Arg-301 contribute to the IMP site. The active-site Proton donor is His-41. 297–303 (TVTGRPR) is a substrate binding site. GTP contacts are provided by residues Arg-303, 329-331 (SID), and 411-413 (SVG).

The protein belongs to the adenylosuccinate synthetase family. In terms of assembly, homodimer. It depends on Mg(2+) as a cofactor.

Its subcellular location is the cytoplasm. The catalysed reaction is IMP + L-aspartate + GTP = N(6)-(1,2-dicarboxyethyl)-AMP + GDP + phosphate + 2 H(+). It participates in purine metabolism; AMP biosynthesis via de novo pathway; AMP from IMP: step 1/2. Functionally, plays an important role in the de novo pathway of purine nucleotide biosynthesis. Catalyzes the first committed step in the biosynthesis of AMP from IMP. The sequence is that of Adenylosuccinate synthetase from Lacticaseibacillus casei (strain BL23) (Lactobacillus casei).